We begin with the raw amino-acid sequence, 443 residues long: COP9 signalosome complex subunit 2 (443 aa).

The region spanning A254–R416 is the PCI domain.

The protein belongs to the CSN2 family. Component of the CSN complex, probably composed of cops1, cops2, cops3, cops4, cops5, cops6, cops7, cops8 and cops9.

It is found in the cytoplasm. The protein resides in the nucleus. Functionally, essential component of the COP9 signalosome complex (CSN), a complex involved in various cellular and developmental processes. The CSN complex is an essential regulator of the ubiquitin (Ubl) conjugation pathway by mediating the deneddylation of the cullin subunits of E3 ligase complexes, leading to modify the Ubl ligase activity. In Danio rerio (Zebrafish), this protein is COP9 signalosome complex subunit 2 (cops2).